Consider the following 828-residue polypeptide: MSSKQATSPFACAADGEDAMTQDLTSREKEEGSDQHVASHLPLHPIMHNKPHSEELPTLVSTIQQDADWDSVLSSQQRMESENNKLCSLYSFRNTSTSPHKPDEGSRDREIMTSVTFGTPERRKGSLADVVDTLKQKKLEEMTRTEQEDSSCMEKLLSKDWKEKMERLNTSELLGEIKGTPESLAEKERQLSTMITQLISLREQLLAAHDEQKKLAASQIEKQRQQMDLARQQQEQIARQQQQLLQQQHKINLLQQQIQVQGHMPPLMIPIFPHDQRTLAAAAAAQQGFLFPPGITYKPGDNYPVQFIPSTMAAAAASGLSPLQLQKGHVSHPQINQRLKGLSDRFGRNLDTFEHGGGHSYNHKQIEQLYAAQLASMQVSPGAKMPSTPQPPNTAGTVSPTGIKNEKRGTSPVTQVKDEAAAQPLNLSSRPKTAEPVKSPTSPTQNLFPASKTSPVNLPNKSSIPSPIGGSLGRGSSLDILSSLNSPALFGDQDTVMKAIQEARKMREQIQREQQQQQPHGVDGKLSSINNMGLNSCRNEKERTRFENLGPQLTGKSNEDGKLGPGVIDLTRPEDAEGSKAMNGSAAKLQQYYCWPTGGATVAEARVYRDARGRASSEPHIKRPMNAFMVWAKDERRKILQAFPDMHNSNISKILGSRWKSMSNQEKQPYYEEQARLSKIHLEKYPNYKYKPRPKRTCIVDGKKLRIGEYKQLMRSRRQEMRQFFTVGQQPQIPITTGTGVVYPGAITMATTTPSPQMTSDCSSTSASPEPSLPVIQSTYGMKTDGGSLAGNEMINGEDEMEMYDDYEDDPKSDYSSENEAPEAVSAN.

Positions 1-51 (MSSKQATSPFACAADGEDAMTQDLTSREKEEGSDQHVASHLPLHPIMHNKP) are disordered. A compositionally biased stretch (basic and acidic residues) spans 25 to 34 (TSREKEEGSD). Threonine 119 is subject to Phosphothreonine. A coiled-coil region spans residues 184–262 (LAEKERQLST…LLQQQIQVQG (79 aa)). Positions 380-470 (SPGAKMPSTP…KSSIPSPIGG (91 aa)) are disordered. Residues 393–402 (NTAGTVSPTG) are compositionally biased toward polar residues. Phosphoserine is present on serine 399. Threonine 401 carries the phosphothreonine modification. Residues lysine 404 and lysine 417 each participate in a glycyl lysine isopeptide (Lys-Gly) (interchain with G-Cter in SUMO) cross-link. Serine 439 and serine 442 each carry phosphoserine. Polar residues predominate over residues 439–461 (SPTSPTQNLFPASKTSPVNLPNK). The HMG box DNA-binding region spans 621 to 689 (IKRPMNAFMV…IHLEKYPNYK (69 aa)). Over residues 753–781 (TPSPQMTSDCSSTSASPEPSLPVIQSTYG) the composition is skewed to polar residues. Residues 753–828 (TPSPQMTSDC…NEAPEAVSAN (76 aa)) are disordered. The segment covering 796 to 809 (NGEDEMEMYDDYED) has biased composition (acidic residues).

Homodimer. Interacts with DAZAP2. May interact with CENPK. Sumoylation inhibits the transcriptional activity. Expressed in a wide variety of tissues, most abundantly in skeletal musclen.

It localises to the nucleus. The protein localises to the cytoplasm. In terms of biological role, transcription factor that plays a key role in several developmental processes, including neurogenesis, chondrocytes differentiation and cartilage formation. Specifically binds the 5'-AACAAT-3' DNA motif present in enhancers and super-enhancers and promotes expression of genes important for chondrogenesis. Required for overt chondrogenesis when condensed prechondrocytes differentiate into early stage chondrocytes: SOX5 and SOX6 cooperatively bind with SOX9 on active enhancers and super-enhancers associated with cartilage-specific genes, and thereby potentiate SOX9's ability to transactivate. Not involved in precartilaginous condensation, the first step in chondrogenesis, during which skeletal progenitors differentiate into prechondrocytes. Together with SOX5, required to form and maintain a pool of highly proliferating chondroblasts between epiphyses and metaphyses, to form columnar chondroblasts, delay chondrocyte prehypertrophy but promote hypertrophy, and to delay terminal differentiation of chondrocytes on contact with ossification fronts. Binds to the proximal promoter region of the myelin protein MPZ gene, and is thereby involved in the differentiation of oligodendroglia in the developing spinal tube. Binds to the gene promoter of MBP and acts as a transcriptional repressor. This is Transcription factor SOX-6 from Homo sapiens (Human).